The sequence spans 534 residues: CTP synthase (534 aa).

An amidoligase domain region spans residues 1–267 (MTKYIFVTGG…DQIVCDHLKL (267 aa)). A CTP-binding site is contributed by Ser13. Ser13 contacts UTP. Residue 14–19 (SIGKGI) coordinates ATP. Tyr54 is an L-glutamine binding site. Asp71 lines the ATP pocket. Residues Asp71 and Glu141 each contribute to the Mg(2+) site. Residues 148–150 (DIE), 188–193 (KTKPTQ), and Lys224 contribute to the CTP site. UTP-binding positions include 188 to 193 (KTKPTQ) and Lys224. The 243-residue stretch at 292-534 (KIALVGKYVE…FVTAAVENMK (243 aa)) folds into the Glutamine amidotransferase type-1 domain. Gly354 contributes to the L-glutamine binding site. Residue Cys381 is the Nucleophile; for glutamine hydrolysis of the active site. L-glutamine contacts are provided by residues 382–385 (LGMQ), Glu405, and Arg463. Active-site residues include His508 and Glu510.

Belongs to the CTP synthase family. Homotetramer.

It catalyses the reaction UTP + L-glutamine + ATP + H2O = CTP + L-glutamate + ADP + phosphate + 2 H(+). It carries out the reaction L-glutamine + H2O = L-glutamate + NH4(+). The catalysed reaction is UTP + NH4(+) + ATP = CTP + ADP + phosphate + 2 H(+). Its pathway is pyrimidine metabolism; CTP biosynthesis via de novo pathway; CTP from UDP: step 2/2. With respect to regulation, allosterically activated by GTP, when glutamine is the substrate; GTP has no effect on the reaction when ammonia is the substrate. The allosteric effector GTP functions by stabilizing the protein conformation that binds the tetrahedral intermediate(s) formed during glutamine hydrolysis. Inhibited by the product CTP, via allosteric rather than competitive inhibition. Catalyzes the ATP-dependent amination of UTP to CTP with either L-glutamine or ammonia as the source of nitrogen. Regulates intracellular CTP levels through interactions with the four ribonucleotide triphosphates. This chain is CTP synthase, found in Streptococcus agalactiae serotype Ia (strain ATCC 27591 / A909 / CDC SS700).